Reading from the N-terminus, the 262-residue chain is MADIRELWDDVARSVAFLSRIPVPDRYFHGYDGGLGRAVRAFPLAAILITLPAAAIAFILGALHASSLFSAFLVVAVQAMVTGALHEDGLGDTADGFGGGRDRESALEIMKDSRIGTYGAVALILSFGLRVSALAAFLPLLTPTGGGIALLATAALSRAAMVWHWSRLPPARRGGVAASAGIPEPGATSVALGSGVLLALVLFFLAGIPTVAVWLSFAAFGLAVPGFTRIASRKLGGHTGDTIGATQQLTEVAVLGALALAI.

The next 5 helical transmembrane spans lie at A41–G61, A65–L85, I115–S132, L134–L156, and G195–L215.

The protein belongs to the CobS family. The cofactor is Mg(2+).

The protein resides in the cell inner membrane. The catalysed reaction is alpha-ribazole + adenosylcob(III)inamide-GDP = adenosylcob(III)alamin + GMP + H(+). It catalyses the reaction alpha-ribazole 5'-phosphate + adenosylcob(III)inamide-GDP = adenosylcob(III)alamin 5'-phosphate + GMP + H(+). It functions in the pathway cofactor biosynthesis; adenosylcobalamin biosynthesis; adenosylcobalamin from cob(II)yrinate a,c-diamide: step 7/7. Its function is as follows. Joins adenosylcobinamide-GDP and alpha-ribazole to generate adenosylcobalamin (Ado-cobalamin). Also synthesizes adenosylcobalamin 5'-phosphate from adenosylcobinamide-GDP and alpha-ribazole 5'-phosphate. This Rhizobium meliloti (strain 1021) (Ensifer meliloti) protein is Adenosylcobinamide-GDP ribazoletransferase.